Consider the following 180-residue polypeptide: Shikimate kinase (180 aa).

An ATP-binding site is contributed by 15–20 (GAGKTT). Threonine 19 serves as a coordination point for Mg(2+). 3 residues coordinate substrate: aspartate 37, arginine 61, and glycine 83. Arginine 121 is a binding site for ATP. Position 140 (arginine 140) interacts with substrate.

Belongs to the shikimate kinase family. In terms of assembly, monomer. Mg(2+) serves as cofactor.

Its subcellular location is the cytoplasm. The catalysed reaction is shikimate + ATP = 3-phosphoshikimate + ADP + H(+). Its pathway is metabolic intermediate biosynthesis; chorismate biosynthesis; chorismate from D-erythrose 4-phosphate and phosphoenolpyruvate: step 5/7. In terms of biological role, catalyzes the specific phosphorylation of the 3-hydroxyl group of shikimic acid using ATP as a cosubstrate. The sequence is that of Shikimate kinase from Psychrobacter sp. (strain PRwf-1).